The sequence spans 253 residues: Regulatory protein VirG (253 aa).

Residues His-15 to Leu-129 form the Response regulatory domain. At Asp-64 the chain carries 4-aspartylphosphate. The ompR/PhoB-type DNA-binding region spans Arg-141–Ala-241.

Phosphorylated by wide host range (WHR) VirA protein.

The protein localises to the cytoplasm. In terms of biological role, virG is required for the positive regulation of at least two vir loci encoded by the Ti plasmid of A.tumefaciens. The chain is Regulatory protein VirG (virG) from Agrobacterium fabrum (strain C58 / ATCC 33970) (Agrobacterium tumefaciens (strain C58)).